The following is a 322-amino-acid chain: D-alanine--D-alanine ligase (322 aa).

An ATP-grasp domain is found at 108–311 (KEFYYNAELP…FPSLLDTLIE (204 aa)). 136-192 (IEDLGLPLVVKPACAGSSIGISLAHTEEELLAGINHARDCSAGAIMVEQFIKGRELT) contacts ATP. Mg(2+) contacts are provided by Asp265, Glu278, and Asn280.

This sequence belongs to the D-alanine--D-alanine ligase family. Mg(2+) serves as cofactor. The cofactor is Mn(2+).

It is found in the cytoplasm. It catalyses the reaction 2 D-alanine + ATP = D-alanyl-D-alanine + ADP + phosphate + H(+). It participates in cell wall biogenesis; peptidoglycan biosynthesis. Cell wall formation. This Desulfotalea psychrophila (strain LSv54 / DSM 12343) protein is D-alanine--D-alanine ligase.